The primary structure comprises 134 residues: Small ribosomal subunit protein uS9 (134 aa).

The tract at residues 114-134 (EVERKKYGLKKARRAPQFSKR) is disordered. Residues 120-134 (YGLKKARRAPQFSKR) show a composition bias toward basic residues.

The protein belongs to the universal ribosomal protein uS9 family.

This Thermotoga sp. (strain RQ2) protein is Small ribosomal subunit protein uS9.